The sequence spans 970 residues: Sodium/calcium exchanger 1 (970 aa).

Residues 1 to 32 form the signal peptide; it reads MLQLRLLPTFSMGCHLLAVVALLFSHVDLISA. The Extracellular segment spans residues 33 to 71; that stretch reads ETEMEGEGNETGECTGSYYCKKGVILPIWEPQDPSFGDK. A glycan (N-linked (GlcNAc...) asparagine) is linked at N41. Residues 72-92 form a helical membrane-spanning segment; it reads IARATVYFVAMVYMFLGVSII. The Cytoplasmic portion of the chain corresponds to 93–133; sequence ADRFMSSIEVITSQEKEITIKKPNGETTKTTVRIWNETVSN. Residues 134 to 154 traverse the membrane as a helical segment; that stretch reads LTLMALGSSAPEILLSVIEVC. Residues 138 to 178 form an Alpha-1 repeat; that stretch reads ALGSSAPEILLSVIEVCGHNFTAGDLGPSTIVGSAAFNMFI. The Extracellular segment spans residues 155–167; sequence GHNFTAGDLGPST. The N-linked (GlcNAc...) asparagine glycan is linked to N157. The chain crosses the membrane as a helical span at residues 168 to 188; sequence IVGSAAFNMFIIIALCVYVVP. Over 189–201 the chain is Cytoplasmic; that stretch reads DGETRKIKHLRVF. A helical transmembrane segment spans residues 202–222; it reads FVTAAWSIFAYTWLYIILSVI. Residues 223-228 lie on the Extracellular side of the membrane; the sequence is SPGVVE. A helical membrane pass occupies residues 229 to 249; sequence VWEGLLTFFFFPICVVFAWVA. The Cytoplasmic segment spans residues 250-797; it reads DRRLLFYKYV…FVPPTEYWNG (548 aa). A putative calmodulin-binding region region spans residues 251-270; it reads RRLLFYKYVYKRYRAGKQRG. Phosphoserine is present on residues S282 and S389. 2 Calx-beta domains span residues 393–493 and 524–624; these read VNTE…VHLS and ATVT…LEIG. Ca(2+) contacts are provided by E417, D453, D478, D479, I481, E483, E486, D530, D531, D532, E548, D584, D610, E611, E612, and E715. The chain crosses the membrane as a helical span at residues 798 to 818; the sequence is WACFIVSILMIGILTAFIGDL. At 819 to 821 the chain is on the extracellular side; it reads ASH. A helical membrane pass occupies residues 822 to 842; the sequence is FGCTIGLKDSVTAVVFVALGT. Residues 839–875 form an Alpha-2 repeat; that stretch reads ALGTSVPDTFASKVAATQDQYADASIGNVTGSNAVNV. Topologically, residues 843 to 871 are cytoplasmic; it reads SVPDTFASKVAATQDQYADASIGNVTGSN. A helical membrane pass occupies residues 872–892; sequence AVNVFLGIGVAWSIAAIYHAA. The Extracellular portion of the chain corresponds to 893-903; it reads NGEQFKVSPGT. A helical membrane pass occupies residues 904–924; sequence LAFSVTLFTIFAFINVGVLLY. The Cytoplasmic portion of the chain corresponds to 925-941; it reads RRRPEIGGELGGPRTAK. The chain crosses the membrane as a helical span at residues 942–962; that stretch reads LLTSCLFVLLWLLYIFFSSLE. Topologically, residues 963-970 are extracellular; sequence AYCHIKGF.

This sequence belongs to the Ca(2+):cation antiporter (CaCA) (TC 2.A.19) family. SLC8 subfamily. In terms of tissue distribution, cardiac sarcolemma (at protein level).

It is found in the cell membrane. It localises to the sarcolemma. The enzyme catalyses Ca(2+)(in) + 3 Na(+)(out) = Ca(2+)(out) + 3 Na(+)(in). Its activity is regulated as follows. Activated by micromolar levels of Ca(2+). In the absence of regulatory Ca(2+), channels open rapidly, and then inactivate rapidly. Inactivation is enhanced by Na(+) and is inhibited by micromolar levels of Ca(2+). In terms of biological role, mediates the exchange of one Ca(2+) ion against three to four Na(+) ions across the cell membrane, and thereby contributes to the regulation of cytoplasmic Ca(2+) levels and Ca(2+)-dependent cellular processes. Contributes to Ca(2+) transport during excitation-contraction coupling in muscle. In a first phase, voltage-gated channels mediate the rapid increase of cytoplasmic Ca(2+) levels due to release of Ca(2+) stores from the endoplasmic reticulum. SLC8A1 mediates the export of Ca(2+) from the cell during the next phase, so that cytoplasmic Ca(2+) levels rapidly return to baseline. Required for normal embryonic heart development and the onset of heart contractions. The sequence is that of Sodium/calcium exchanger 1 (SLC8A1) from Canis lupus familiaris (Dog).